Here is a 344-residue protein sequence, read N- to C-terminus: Arginine N-succinyltransferase (344 aa).

Residue Leu125 coordinates succinyl-CoA. The active-site Proton donor is the His229.

The protein belongs to the arginine N-succinyltransferase family.

It carries out the reaction succinyl-CoA + L-arginine = N(2)-succinyl-L-arginine + CoA + H(+). The protein operates within amino-acid degradation; L-arginine degradation via AST pathway; L-glutamate and succinate from L-arginine: step 1/5. Catalyzes the transfer of succinyl-CoA to arginine to produce N(2)-succinylarginine. This chain is Arginine N-succinyltransferase, found in Shigella sonnei (strain Ss046).